An 83-amino-acid polypeptide reads, in one-letter code: Translation initiation factor IF-1 (83 aa).

The region spanning 1 to 72 is the S1-like domain; it reads MAKEELIEMQ…SKGRITFRHL (72 aa).

Belongs to the IF-1 family. In terms of assembly, component of the 30S ribosomal translation pre-initiation complex which assembles on the 30S ribosome in the order IF-2 and IF-3, IF-1 and N-formylmethionyl-tRNA(fMet); mRNA recruitment can occur at any time during PIC assembly.

It localises to the cytoplasm. One of the essential components for the initiation of protein synthesis. Stabilizes the binding of IF-2 and IF-3 on the 30S subunit to which N-formylmethionyl-tRNA(fMet) subsequently binds. Helps modulate mRNA selection, yielding the 30S pre-initiation complex (PIC). Upon addition of the 50S ribosomal subunit IF-1, IF-2 and IF-3 are released leaving the mature 70S translation initiation complex. This chain is Translation initiation factor IF-1, found in Verminephrobacter eiseniae (strain EF01-2).